Consider the following 324-residue polypeptide: Serine carboxypeptidase II-1 (324 aa).

N10 is a glycosylation site (N-linked (GlcNAc...) asparagine). S41 is a catalytic residue. Cystine bridges form between C109-C121 and C145-C170. The propeptide at 150–162 (LHRRRLIKGRRPW) is linker peptide. The N-linked (GlcNAc...) asparagine glycan is linked to N191. Active-site residues include D239 and H291.

It belongs to the peptidase S10 family. In terms of assembly, carboxypeptidase II is a dimer, where each monomer is composed of two chains linked by a disulfide bond. The linker peptide is endoproteolytically excised during enzyme maturation.

It catalyses the reaction Preferential release of a C-terminal arginine or lysine residue.. The sequence is that of Serine carboxypeptidase II-1 (CXP;2-1) from Hordeum vulgare (Barley).